Here is a 73-residue protein sequence, read N- to C-terminus: Putative antitoxin VapB9 (73 aa).

Functionally, antitoxin component of a possible type II toxin-antitoxin (TA) system. The cognate toxin is VapC9. The polypeptide is Putative antitoxin VapB9 (vapB9) (Mycobacterium tuberculosis (strain CDC 1551 / Oshkosh)).